We begin with the raw amino-acid sequence, 391 residues long: Rhizopuspepsin-2 (391 aa).

A signal peptide spans 1 to 21 (MKLTLISSCVALAFMALATEA). Positions 22 to 68 (APSGKKLSIPLTKNTNYKPSAKNAIQKALAKYHRFRTTSSSNSTSTE) are cleaved as a propeptide — activation peptide. Positions 84–388 (YYGKVTVGTP…NQEVPEVQIA (305 aa)) constitute a Peptidase A1 domain. Asp-102 is an active-site residue. A disulfide bridge links Cys-115 with Cys-118. The active site involves Asp-285. A disulfide bridge connects residues Cys-319 and Cys-352.

Belongs to the peptidase A1 family.

The catalysed reaction is Hydrolysis of proteins with broad specificity similar to that of pepsin A, preferring hydrophobic residues at P1 and P1'. Clots milk and activates trypsinogen. Does not cleave 4-Gln-|-His-5, but does cleave 10-His-|-Leu-11 and 12-Val-|-Glu-13 in B chain of insulin.. This Rhizopus niveus protein is Rhizopuspepsin-2.